A 545-amino-acid polypeptide reads, in one-letter code: MTLLTQSSTWQALSAHSKNVPHMRELFATDTARFNKMSLSACGLLLDYSKNRATAETLDLLFALASNSQLEAKIKAMFAGEIINTTEKRAVLHTALRSTAEQSIIAEGQDIVPEVQQTLNKMQGFVSSVTSGQWKGYTGKAITDIVSIGIGGSFLGPKIVSQALRPYWNPELKCHFVANVDGTSISEKLKLLDPETTLFIMSSKSFGTQETLTNTLTAREWFLAKGGLQSDVAKHFVAVTSNVAKATDFGIDADNIFPMWDWVGGRYSLWSAIGLPIALLIGMDNFRALLSGAHQMDEHFANAPLTENMPVIMGLLSLWYGNFFNAQSNVVLTYDHYLRGLPAYFQQLDMESNGKSVTLNGTAVDYSTGPVIWGGEGTNGQHAYHQLLHQGTALIPADFIMPLQSHNPIGEHHDQLASNCFGQTQALMQGRTFDEALAELANSALSATEKQLIAKHKVMPGNKPSNTLLMDKLTPSTLGALIALYEHRTFVQGAIWDINSFDQWGVELGKDLGNDVLTRIGASQDCDALDASSNALINLYRQGKI.

Glutamate 351 serves as the catalytic Proton donor. Residues histidine 382 and lysine 510 contribute to the active site.

This sequence belongs to the GPI family.

It is found in the cytoplasm. The enzyme catalyses alpha-D-glucose 6-phosphate = beta-D-fructose 6-phosphate. Its pathway is carbohydrate biosynthesis; gluconeogenesis. It participates in carbohydrate degradation; glycolysis; D-glyceraldehyde 3-phosphate and glycerone phosphate from D-glucose: step 2/4. Catalyzes the reversible isomerization of glucose-6-phosphate to fructose-6-phosphate. The polypeptide is Glucose-6-phosphate isomerase (Shewanella baltica (strain OS223)).